The chain runs to 259 residues: Dihydroorotate dehydrogenase B (NAD(+)), electron transfer subunit (259 aa).

Positions 2–102 constitute an FAD-binding FR-type domain; that stretch reads MQKQNMIVVN…LGPLGHGFPV (101 aa). FAD is bound by residues 53 to 56, 70 to 72, and 77 to 78; these read RPIS, LYR, and GT. [2Fe-2S] cluster contacts are provided by Cys221, Cys226, Cys229, and Cys246.

The protein belongs to the PyrK family. In terms of assembly, heterotetramer of 2 PyrK and 2 PyrD type B subunits. Requires [2Fe-2S] cluster as cofactor. FAD serves as cofactor.

It functions in the pathway pyrimidine metabolism; UMP biosynthesis via de novo pathway; orotate from (S)-dihydroorotate (NAD(+) route): step 1/1. Functionally, responsible for channeling the electrons from the oxidation of dihydroorotate from the FMN redox center in the PyrD type B subunit to the ultimate electron acceptor NAD(+). This Bacillus cereus (strain Q1) protein is Dihydroorotate dehydrogenase B (NAD(+)), electron transfer subunit.